A 317-amino-acid chain; its full sequence is 2,3-dihydroxyphenylpropionate/2,3-dihydroxicinnamic acid 1,2-dioxygenase (317 aa).

H115 serves as the catalytic Proton donor. The active-site Proton acceptor is H179.

This sequence belongs to the LigB/MhpB extradiol dioxygenase family. As to quaternary structure, homotetramer. Requires Fe(2+) as cofactor.

The catalysed reaction is 3-(2,3-dihydroxyphenyl)propanoate + O2 = (2Z,4E)-2-hydroxy-6-oxonona-2,4-dienedioate + H(+). It carries out the reaction (2E)-3-(2,3-dihydroxyphenyl)prop-2-enoate + O2 = (2Z,4E,7E)-2-hydroxy-6-oxonona-2,4,7-trienedioate + H(+). The protein operates within aromatic compound metabolism; 3-phenylpropanoate degradation. In terms of biological role, catalyzes the non-heme iron(II)-dependent oxidative cleavage of 2,3-dihydroxyphenylpropionic acid and 2,3-dihydroxicinnamic acid into 2-hydroxy-6-ketononadienedioate and 2-hydroxy-6-ketononatrienedioate, respectively. The polypeptide is 2,3-dihydroxyphenylpropionate/2,3-dihydroxicinnamic acid 1,2-dioxygenase (Photorhabdus laumondii subsp. laumondii (strain DSM 15139 / CIP 105565 / TT01) (Photorhabdus luminescens subsp. laumondii)).